A 916-amino-acid chain; its full sequence is MPPSSAAEGSTKRKKGGAAPHLKSRSKNARKLKRSAEDAEIAQLEQGIQAFVSPIDLKQFTQLPLSDRTCRGLKRAGYTDMTDIQAKSLSLSLKGKDVLGAARTGSGKTLAFLIPVLEILYRRKWGPSDGLGALVISPTRELAIQIFEVLRKIGSYHTFSAGLVIGGKDVKQEKDRLSRINILIATPGRLLQHMDQTLGFDTSNVQVLVLDEADRILDMGFSRTLNAIVENLPRNRQTMLFSATQTKRVKDLARLSLQDPEYVAVREPENEGCTPRGLEQHYMLVELEKKLDLLFSFIRTHTKCKALVFMSSCRQVQFVHETFCKLRPGVSLMALHGKQKQAKRLQIFTQFTKTQHALLFATDIAARGLDFPAVDWVIQLDVPEDVDTYIHRVGRTARYTAKGNSLLFVLPSEEKGILEALATKNIAIGRIKPKESKTQSIQNQLQAFAFQEPQIKHLAQKAFVSYVRSIHLQKNKEIFDVTALALEPFAAALGLPGAPKVKFVKEAAKAKKAAAYKAAQQQADDNSGQVKGDSDDEQAERADKNGKVRTKYDRMFERKNQDILSKHYANLIADDASSEQDSSNDSDTSDDDSVSVATTDNDDAEDREETRYGRSAGRRKENRLVGSDTSDSEEDESDDEQNDSGLHKIKSETKRSVMAARGDGDDGFLTLKRADHALEDDGDAYGIGGDDTRITMEQAKADATENLSKRKLAMGQSKKALALAGKRGIGEKLIFDEHGEAHALYELQDEEAFNKQGDAKTQAQRWAEEERERMQQADAKDKELAKEKRREKRRRQKEREKALERGDAPDNGDEGGSGDDDEEEEETGGRAVLAPIDNRSDGYETPDFDLTTEEDEDDDDDADDDDDDDDEAYRAPAPKRRKMAPSAGVTSQPSHSKKSKLEQEEELALRLLAGDA.

The interval 1–34 (MPPSSAAEGSTKRKKGGAAPHLKSRSKNARKLKR) is disordered. Positions 12-33 (KRKKGGAAPHLKSRSKNARKLK) are enriched in basic residues. The short motif at 58 to 86 (KQFTQLPLSDRTCRGLKRAGYTDMTDIQA) is the Q motif element. Residues 89–263 (LSLSLKGKDV…RLSLQDPEYV (175 aa)) enclose the Helicase ATP-binding domain. 102-109 (ARTGSGKT) contacts ATP. The DEAD box signature appears at 211-214 (DEAD). The 166-residue stretch at 277–442 (GLEQHYMLVE…PKESKTQSIQ (166 aa)) folds into the Helicase C-terminal domain. Disordered regions lie at residues 519 to 554 (AQQQ…KYDR), 575 to 667 (DASS…GDDG), and 752 to 916 (AFNK…AGDA). The span at 539–554 (AERADKNGKVRTKYDR) shows a compositional bias: basic and acidic residues. Residues 576–593 (ASSEQDSSNDSDTSDDDS) are compositionally biased toward acidic residues. Positions 608-623 (EETRYGRSAGRRKENR) are enriched in basic and acidic residues. The span at 630–642 (SDSEEDESDDEQN) shows a compositional bias: acidic residues. 3 stretches are compositionally biased toward basic and acidic residues: residues 645 to 655 (GLHKIKSETKR), 766 to 788 (WAEE…AKEK), and 797 to 808 (KEREKALERGDA). Acidic residues-rich tracts occupy residues 810–826 (DNGD…EEEE) and 844–871 (ETPD…DDDE).

This sequence belongs to the DEAD box helicase family. DDX10/DBP4 subfamily. Interacts with the U3 and U14 snoRNAs. Associates with pre-ribosomal complexes.

Its subcellular location is the nucleus. The protein resides in the nucleolus. The enzyme catalyses ATP + H2O = ADP + phosphate + H(+). Functionally, ATP-dependent RNA helicase required for ribosome biogenesis. Involved in the release of U14 snoRNA in pre-ribosomal complexes. Required for pre-rRNA cleavage at site A2. The sequence is that of ATP-dependent RNA helicase DBP4 (DBP4) from Mycosarcoma maydis (Corn smut fungus).